The chain runs to 185 residues: MAEYDADVPAGIVMTSMEAIVGWLRKTSFWPLTMGLACCAIEMISYGGPRADAARWGHEVFRASPRQADLMIVSGRVSQKMAPVVRQLYDQMPEPKWVISMGACASSGGIFNNYAVVQGCDHIVPVDVYLPGCPPSPDMLIDAVFKIREQIQHWPLMGHMSEVEAAKEKKALDAKTTLEQKGLMR.

4 residues coordinate [4Fe-4S] cluster: C38, C39, C104, and C133.

It belongs to the complex I 20 kDa subunit family. NDH-1 is composed of 14 different subunits. Subunits NuoB, C, D, E, F, and G constitute the peripheral sector of the complex. [4Fe-4S] cluster serves as cofactor.

The protein resides in the cell membrane. The enzyme catalyses a quinone + NADH + 5 H(+)(in) = a quinol + NAD(+) + 4 H(+)(out). In terms of biological role, NDH-1 shuttles electrons from NADH, via FMN and iron-sulfur (Fe-S) centers, to quinones in the respiratory chain. The immediate electron acceptor for the enzyme in this species is believed to be a menaquinone. Couples the redox reaction to proton translocation (for every two electrons transferred, four hydrogen ions are translocated across the cytoplasmic membrane), and thus conserves the redox energy in a proton gradient. This Cutibacterium acnes (strain DSM 16379 / KPA171202) (Propionibacterium acnes) protein is NADH-quinone oxidoreductase subunit B.